Consider the following 475-residue polypeptide: Ribulose bisphosphate carboxylase large chain (475 aa).

Positions 1–2 (MS) are excised as a propeptide. An N-acetylproline modification is found at proline 3. Lysine 14 carries the N6,N6,N6-trimethyllysine modification. Positions 123 and 173 each coordinate substrate. Lysine 175 (proton acceptor) is an active-site residue. Lysine 177 provides a ligand contact to substrate. Positions 201, 203, and 204 each coordinate Mg(2+). Lysine 201 carries the post-translational modification N6-carboxylysine. Catalysis depends on histidine 294, which acts as the Proton acceptor. The substrate site is built by arginine 295, histidine 327, and serine 379.

The protein belongs to the RuBisCO large chain family. Type I subfamily. Heterohexadecamer of 8 large chains and 8 small chains; disulfide-linked. The disulfide link is formed within the large subunit homodimers. The cofactor is Mg(2+). Post-translationally, the disulfide bond which can form in the large chain dimeric partners within the hexadecamer appears to be associated with oxidative stress and protein turnover.

The protein localises to the plastid. It is found in the chloroplast. The catalysed reaction is 2 (2R)-3-phosphoglycerate + 2 H(+) = D-ribulose 1,5-bisphosphate + CO2 + H2O. The enzyme catalyses D-ribulose 1,5-bisphosphate + O2 = 2-phosphoglycolate + (2R)-3-phosphoglycerate + 2 H(+). Functionally, ruBisCO catalyzes two reactions: the carboxylation of D-ribulose 1,5-bisphosphate, the primary event in carbon dioxide fixation, as well as the oxidative fragmentation of the pentose substrate in the photorespiration process. Both reactions occur simultaneously and in competition at the same active site. This chain is Ribulose bisphosphate carboxylase large chain, found in Physcomitrium patens (Spreading-leaved earth moss).